Reading from the N-terminus, the 314-residue chain is Ribosomal protein uL3 glutamine methyltransferase (314 aa).

It belongs to the protein N5-glutamine methyltransferase family. PrmB subfamily.

It carries out the reaction L-glutaminyl-[ribosomal protein uL3] + S-adenosyl-L-methionine = N(5)-methyl-L-glutaminyl-[ribosomal protein uL3] + S-adenosyl-L-homocysteine + H(+). In terms of biological role, methylates large ribosomal subunit protein uL3 on a specific glutamine residue. In Francisella tularensis subsp. tularensis (strain SCHU S4 / Schu 4), this protein is Ribosomal protein uL3 glutamine methyltransferase.